The primary structure comprises 256 residues: tRNA pseudouridine synthase A (256 aa).

Aspartate 52 (nucleophile) is an active-site residue. Tyrosine 110 contacts substrate.

It belongs to the tRNA pseudouridine synthase TruA family. As to quaternary structure, homodimer.

It carries out the reaction uridine(38/39/40) in tRNA = pseudouridine(38/39/40) in tRNA. Formation of pseudouridine at positions 38, 39 and 40 in the anticodon stem and loop of transfer RNAs. The chain is tRNA pseudouridine synthase A from Stenotrophomonas maltophilia (strain K279a).